The chain runs to 126 residues: Arginine decarboxylase proenzyme (126 aa).

Serine 74 (schiff-base intermediate with substrate; via pyruvic acid) is an active-site residue. Serine 74 carries the post-translational modification Pyruvic acid (Ser); by autocatalysis. Histidine 79 serves as the catalytic Proton acceptor; for processing activity. The active-site Proton donor; for catalytic activity is the cysteine 94.

It belongs to the prokaryotic AdoMetDC family. Type 1 subfamily. As to quaternary structure, heterooctamer of four alpha and four beta chains arranged as a tetramer of alpha/beta heterodimers. Requires pyruvate as cofactor. Is synthesized initially as an inactive proenzyme. Formation of the active enzyme involves a self-maturation process in which the active site pyruvoyl group is generated from an internal serine residue via an autocatalytic post-translational modification. Two non-identical subunits are generated from the proenzyme in this reaction, and the pyruvate is formed at the N-terminus of the alpha chain, which is derived from the carboxyl end of the proenzyme. The post-translation cleavage follows an unusual pathway, termed non-hydrolytic serinolysis, in which the side chain hydroxyl group of the serine supplies its oxygen atom to form the C-terminus of the beta chain, while the remainder of the serine residue undergoes an oxidative deamination to produce ammonia and the pyruvoyl group blocking the N-terminus of the alpha chain.

The catalysed reaction is L-arginine + H(+) = agmatine + CO2. It participates in amine and polyamine biosynthesis; agmatine biosynthesis; agmatine from L-arginine: step 1/1. In terms of biological role, specifically catalyzes the decarboxylation of L-arginine to agmatine. Has no S-adenosylmethionine decarboxylase (AdoMetDC) activity. This Pyrobaculum aerophilum (strain ATCC 51768 / DSM 7523 / JCM 9630 / CIP 104966 / NBRC 100827 / IM2) protein is Arginine decarboxylase proenzyme.